We begin with the raw amino-acid sequence, 193 residues long: CRIB domain-containing protein RIC5 (193 aa).

A CRIB domain is found at 29-42 (IGIPTDVKHVAHIG). Residues 42–193 (GWEGPSATTP…CAGLGSSTGR (152 aa)) form a disordered region. Over residues 55-67 (HDFKPTDQTKTET) the composition is skewed to basic and acidic residues. Residues 90–100 (STGNNSPTESP) are compositionally biased toward polar residues. Low complexity predominate over residues 123–134 (GSGSESGSGLEL).

In terms of assembly, interacts with ARAC11/ROP1. Expressed in flowers and pollen.

It localises to the cell membrane. In terms of biological role, functions as a downstream effector of Rho-related GTP binding proteins of the 'Rho of Plants' (ROPs) family. Participates in the propagation of ROP GTPase signals in specific cellular responses. Is involved in pollen tube growth regulation through its interaction with ARAC11/ROP1. The protein is CRIB domain-containing protein RIC5 (RIC5) of Arabidopsis thaliana (Mouse-ear cress).